Reading from the N-terminus, the 195-residue chain is Peptidyl-tRNA hydrolase (195 aa).

Y18 is a tRNA binding site. Residue H23 is the Proton acceptor of the active site. TRNA is bound by residues F69, N71, and N117.

The protein belongs to the PTH family. As to quaternary structure, monomer.

The protein localises to the cytoplasm. It catalyses the reaction an N-acyl-L-alpha-aminoacyl-tRNA + H2O = an N-acyl-L-amino acid + a tRNA + H(+). Hydrolyzes ribosome-free peptidyl-tRNAs (with 1 or more amino acids incorporated), which drop off the ribosome during protein synthesis, or as a result of ribosome stalling. Its function is as follows. Catalyzes the release of premature peptidyl moieties from peptidyl-tRNA molecules trapped in stalled 50S ribosomal subunits, and thus maintains levels of free tRNAs and 50S ribosomes. In Hahella chejuensis (strain KCTC 2396), this protein is Peptidyl-tRNA hydrolase.